The primary structure comprises 38 residues: Photosystem II reaction center protein L (38 aa).

A helical transmembrane segment spans residues 17-37; that stretch reads SLYWGLLLIFVLAVLFSNYFF.

The protein belongs to the PsbL family. PSII is composed of 1 copy each of membrane proteins PsbA, PsbB, PsbC, PsbD, PsbE, PsbF, PsbH, PsbI, PsbJ, PsbK, PsbL, PsbM, PsbT, PsbX, PsbY, PsbZ, Psb30/Ycf12, at least 3 peripheral proteins of the oxygen-evolving complex and a large number of cofactors. It forms dimeric complexes.

Its subcellular location is the plastid. The protein localises to the chloroplast thylakoid membrane. One of the components of the core complex of photosystem II (PSII). PSII is a light-driven water:plastoquinone oxidoreductase that uses light energy to abstract electrons from H(2)O, generating O(2) and a proton gradient subsequently used for ATP formation. It consists of a core antenna complex that captures photons, and an electron transfer chain that converts photonic excitation into a charge separation. This subunit is found at the monomer-monomer interface and is required for correct PSII assembly and/or dimerization. The polypeptide is Photosystem II reaction center protein L (Antirrhinum majus (Garden snapdragon)).